A 400-amino-acid chain; its full sequence is Probable RNA polymerase sigma factor RfaY (400 aa).

Positions 62–75 (WQRLAQLHQPASFL) match the Polymerase core binding motif. The H-T-H motif DNA-binding region spans 165–184 (SDAAVRKRLSRARATVRNEL).

Belongs to the sigma-70 factor family. ECF subfamily.

Its function is as follows. Sigma factors are initiation factors that promote the attachment of RNA polymerase to specific initiation sites and are then released. This sigma factor is involved in lipopolysaccharide biosynthesis and pathogenicity. This chain is Probable RNA polymerase sigma factor RfaY (rfaY), found in Xanthomonas campestris pv. campestris (strain ATCC 33913 / DSM 3586 / NCPPB 528 / LMG 568 / P 25).